Here is a 312-residue protein sequence, read N- to C-terminus: Homoserine O-succinyltransferase (312 aa).

C142 (acyl-thioester intermediate) is an active-site residue. The substrate site is built by K163 and S192. H235 acts as the Proton acceptor in catalysis. E237 is an active-site residue. R249 contributes to the substrate binding site.

This sequence belongs to the MetA family.

It is found in the cytoplasm. It catalyses the reaction L-homoserine + succinyl-CoA = O-succinyl-L-homoserine + CoA. Its pathway is amino-acid biosynthesis; L-methionine biosynthesis via de novo pathway; O-succinyl-L-homoserine from L-homoserine: step 1/1. In terms of biological role, transfers a succinyl group from succinyl-CoA to L-homoserine, forming succinyl-L-homoserine. The polypeptide is Homoserine O-succinyltransferase (Alteromonas mediterranea (strain DSM 17117 / CIP 110805 / LMG 28347 / Deep ecotype)).